The chain runs to 468 residues: Beta-amylase (468 aa).

A signal peptide spans 1–36 (MTLYRSLWKKGCMLLLSLVLSLTAFIGSPSNTASAA). Asp-76 contacts substrate. Glu-83 and Asp-87 together coordinate Ca(2+). The substrate site is built by His-116 and Asp-124. Cys-118 and Cys-126 are oxidised to a cystine. Residue Glu-170 coordinates Ca(2+). The Proton donor role is filled by Glu-198. Residues Lys-314, His-319, and Thr-357 each coordinate substrate. Glu-394 (proton acceptor) is an active-site residue. Substrate is bound by residues 395-396 (NA) and Arg-423.

The protein belongs to the glycosyl hydrolase 14 family. Ca(2+) is required as a cofactor.

The catalysed reaction is Hydrolysis of (1-&gt;4)-alpha-D-glucosidic linkages in polysaccharides so as to remove successive maltose units from the non-reducing ends of the chains.. The protein is Beta-amylase of Cytobacillus firmus (Bacillus firmus).